Consider the following 374-residue polypeptide: Homoserine O-succinyltransferase (374 aa).

One can recognise an AB hydrolase-1 domain in the interval 47–357 (NAILVCHALS…NFGHDSFLME (311 aa)). Residue Ser-153 is the Nucleophile of the active site. Residue Arg-223 participates in substrate binding. Catalysis depends on residues Asp-318 and His-351. Substrate is bound at residue Asp-352.

It belongs to the AB hydrolase superfamily. MetX family. In terms of assembly, homodimer.

It localises to the cytoplasm. The enzyme catalyses L-homoserine + succinyl-CoA = O-succinyl-L-homoserine + CoA. Its pathway is amino-acid biosynthesis; L-methionine biosynthesis via de novo pathway; O-succinyl-L-homoserine from L-homoserine: step 1/1. Its function is as follows. Transfers a succinyl group from succinyl-CoA to L-homoserine, forming succinyl-L-homoserine. The protein is Homoserine O-succinyltransferase of Dechloromonas aromatica (strain RCB).